The following is a 364-amino-acid chain: Lytic cellulose monooxygenase (364 aa).

A signal peptide spans 1–34 (MARRSRYISLAAVMATLLSALGVTFLLGQGRAEA). H35 and H144 together coordinate Cu cation. The 191-residue stretch at 35–225 (HGVAMMPGSR…QENFFSCSDV (191 aa)) folds into the Chitin-binding type-4 domain. Residues 234–261 (VTGIRGSGGTPTPTPTPTTPPTTPPPTH) form a disordered region. The span at 245–260 (TPTPTPTTPPTTPPPT) shows a compositional bias: pro residues. One can recognise a CBM2 domain in the interval 258-364 (PPTHSGSCMA…PVGTIGCVAP (107 aa)).

Requires Cu(2+) as cofactor.

The protein resides in the secreted. The enzyme catalyses [(1-&gt;4)-beta-D-glucosyl]n+m + reduced acceptor + O2 = [(1-&gt;4)-beta-D-glucosyl]m-1-(1-&gt;4)-D-glucono-1,5-lactone + [(1-&gt;4)-beta-D-glucosyl]n + acceptor + H2O.. It participates in glycan metabolism; cellulose degradation. Its function is as follows. Involved in the degradation of lignocellulosic biomass. Catalyzes the oxidative cleavage of glycosidic bonds in cellulosic substrates via a copper-dependent mechanism. Degrades phosphoric acid swollen cellulose (PASC) to oxidized cellooligosaccharides with degrees of polymerization of 4-8. Also shows activity on agricultural fiber paper pulps such as flax pulp. Is not active on chitin. This chain is Lytic cellulose monooxygenase, found in Streptomyces ambofaciens (strain ATCC 23877 / 3486 / DSM 40053 / JCM 4204 / NBRC 12836 / NRRL B-2516).